The primary structure comprises 1033 residues: Ubiquitin carboxyl-terminal hydrolase 48 (1033 aa).

Residues 89–419 enclose the USP domain; the sequence is VGLTNLGATC…NAYMLVYRLQ (331 aa). Residue Cys-98 is the Nucleophile of the active site. The active-site Proton acceptor is His-351. DUSP domains are found at residues 457-552, 567-690, and 710-823; these read QSVA…KALC, NQLN…NKEC, and MMAS…RTRA. The segment at 610–639 is disordered; sequence EQDEDAEHSNGKLNGNAPNKDEVNEEKREE. Positions 878 to 920 are disordered; the sequence is APELNVSSSEAEEEREENKPEGEQDPDFNQSNGGAKRQKLSHQ. The Ubiquitin-like domain maps to 931 to 1007; it reads RRSTRHRKVR…ILLKADEPIA (77 aa).

The protein belongs to the peptidase C19 family.

The protein localises to the cytoplasm. Its subcellular location is the nucleus. It catalyses the reaction Thiol-dependent hydrolysis of ester, thioester, amide, peptide and isopeptide bonds formed by the C-terminal Gly of ubiquitin (a 76-residue protein attached to proteins as an intracellular targeting signal).. Functionally, recognizes and hydrolyzes the peptide bond at the C-terminal Gly of ubiquitin. Involved in the processing of poly-ubiquitin precursors as well as that of ubiquitinated proteins. In Gallus gallus (Chicken), this protein is Ubiquitin carboxyl-terminal hydrolase 48 (USP48).